The following is a 244-amino-acid chain: INO80 complex subunit E (244 aa).

A coiled-coil region spans residues 10-54 (DYKKKYRNLKRKLKFLIYEHECFQEELRKAQRKLLKVSRDKSFLL). Positions 63 to 236 (VDEDSSDSDA…SGDDALDGDD (174 aa)) are disordered. Positions 99-115 (PPLGGAPSPSSLSLPPS) are enriched in low complexity. Residues 157–171 (RPKREKRPRLPRKLK) are compositionally biased toward basic residues. Residues K159 and K171 each participate in a glycyl lysine isopeptide (Lys-Gly) (interchain with G-Cter in SUMO2) cross-link. A compositionally biased stretch (pro residues) spans 202–212 (PLPPPKMPPPT).

Component of the chromatin remodeling INO80 complex; specifically part of a complex module associated with the N-terminus of INO80.

The protein resides in the nucleus. Functionally, putative regulatory component of the chromatin remodeling INO80 complex which is involved in transcriptional regulation, DNA replication and probably DNA repair. The protein is INO80 complex subunit E (INO80E) of Homo sapiens (Human).